Reading from the N-terminus, the 253-residue chain is MRFDFFVSKRLNISRNKALELIENEEVLLNGKSFKASFDVKNFLENLKKTQDLNPEDILLTDGLKLDLLSEIYVSRAALKLKNFLEENGIEIKHKNCLDIGSSTGGFVQILLENQALKITALDVGNNQLHLSLRTNEKIILHENTDLRTFKSEEKFELITCDVSFISLINLLYYIDNLALKEIILLFKPQFEVGKNIKRDKKGVLKDDKAILKARMDFEKACAKLGWLLKNTQKSSIKGKEGNVEYFYYYIKN.

One can recognise an S4 RNA-binding domain in the interval 1–73 (MRFDFFVSKR…LKLDLLSEIY (73 aa)).

This sequence belongs to the TlyA family.

The catalysed reaction is cytidine(1920) in 23S rRNA + S-adenosyl-L-methionine = 2'-O-methylcytidine(1920) in 23S rRNA + S-adenosyl-L-homocysteine + H(+). Functionally, catalyzes the 2'-O-methylation at nucleotide C1920 in 23S rRNA. Enhances motility. Enhances biofilm formation. Involved in the assembly of 70S ribosomes. Involved in virulence by promoting adherence and invasion to host cells. Involved in pathogenicity by modulating secretion of host-protective chemokine interleukin 8 (IL-8). Involved in susceptibility to antibiotic capreomycin. This chain is 23S rRNA (cytidine-2'-O)-methyltransferase TlyA, found in Campylobacter jejuni subsp. jejuni serotype O:23/36 (strain 81-176).